The primary structure comprises 536 residues: 3',5'-cyclic-AMP phosphodiesterase 4C (536 aa).

The segment at 49-69 is disordered; sequence QALLGTPPQSSQQAAPAEESG. The 330-residue stretch at 178–507 folds into the PDEase domain; the sequence is VQTDQEEQLA…EWYQSRVPCS (330 aa). The Proton donor role is filled by histidine 254. A 3',5'-cyclic AMP-binding site is contributed by histidine 254. The AMP site is built by histidine 254 and histidine 258. The Zn(2+) site is built by histidine 258, histidine 294, aspartate 295, and aspartate 412. Aspartate 295, aspartate 412, glutamine 463, and phenylalanine 466 together coordinate AMP. Aspartate 295 is a Mg(2+) binding site. Residue aspartate 295 coordinates Mn(2+). 3',5'-cyclic AMP is bound by residues glutamine 463 and phenylalanine 466. Serine 507 carries the post-translational modification Phosphoserine.

The protein belongs to the cyclic nucleotide phosphodiesterase family. PDE4 subfamily. Part of a complex containing AKAP5, ADCY5, ADCY6 and PKD2. It depends on Zn(2+) as a cofactor. Mg(2+) serves as cofactor. The cofactor is Mn(2+).

It is found in the cell projection. Its subcellular location is the cilium. It carries out the reaction 3',5'-cyclic AMP + H2O = AMP + H(+). The protein operates within purine metabolism; 3',5'-cyclic AMP degradation; AMP from 3',5'-cyclic AMP: step 1/1. In terms of biological role, hydrolyzes the second messenger cAMP, which is a key regulator of many important physiological processes. The sequence is that of 3',5'-cyclic-AMP phosphodiesterase 4C from Rattus norvegicus (Rat).